The primary structure comprises 613 residues: Dihydroxy-acid dehydratase (613 aa).

Residue D81 participates in Mg(2+) binding. A [2Fe-2S] cluster-binding site is contributed by C122. 2 residues coordinate Mg(2+): D123 and K124. Position 124 is an N6-carboxylysine (K124). [2Fe-2S] cluster is bound at residue C195. E491 is a binding site for Mg(2+). S517 (proton acceptor) is an active-site residue.

It belongs to the IlvD/Edd family. In terms of assembly, homodimer. Requires [2Fe-2S] cluster as cofactor. Mg(2+) serves as cofactor.

The enzyme catalyses (2R)-2,3-dihydroxy-3-methylbutanoate = 3-methyl-2-oxobutanoate + H2O. The catalysed reaction is (2R,3R)-2,3-dihydroxy-3-methylpentanoate = (S)-3-methyl-2-oxopentanoate + H2O. The protein operates within amino-acid biosynthesis; L-isoleucine biosynthesis; L-isoleucine from 2-oxobutanoate: step 3/4. It participates in amino-acid biosynthesis; L-valine biosynthesis; L-valine from pyruvate: step 3/4. Its function is as follows. Functions in the biosynthesis of branched-chain amino acids. Catalyzes the dehydration of (2R,3R)-2,3-dihydroxy-3-methylpentanoate (2,3-dihydroxy-3-methylvalerate) into 2-oxo-3-methylpentanoate (2-oxo-3-methylvalerate) and of (2R)-2,3-dihydroxy-3-methylbutanoate (2,3-dihydroxyisovalerate) into 2-oxo-3-methylbutanoate (2-oxoisovalerate), the penultimate precursor to L-isoleucine and L-valine, respectively. This chain is Dihydroxy-acid dehydratase, found in Buchnera aphidicola subsp. Melaphis rhois.